The primary structure comprises 126 residues: MARLSGVDLPREKRVEIALTYIFGIGRSRSRDTLAATGVNPDTRVRDLTDDEVQKLREWIDANYRVEGDLNREIKQDIRRKMEIGCYQGLRHRRNLPVHGQRTHTNARTRKGPRRAIAGKKKAGKK.

The disordered stretch occupies residues 94-126 (RNLPVHGQRTHTNARTRKGPRRAIAGKKKAGKK).

It belongs to the universal ribosomal protein uS13 family. As to quaternary structure, part of the 30S ribosomal subunit. Forms a loose heterodimer with protein S19. Forms two bridges to the 50S subunit in the 70S ribosome.

Its function is as follows. Located at the top of the head of the 30S subunit, it contacts several helices of the 16S rRNA. In the 70S ribosome it contacts the 23S rRNA (bridge B1a) and protein L5 of the 50S subunit (bridge B1b), connecting the 2 subunits; these bridges are implicated in subunit movement. Contacts the tRNAs in the A and P-sites. The polypeptide is Small ribosomal subunit protein uS13 (Parafrankia sp. (strain EAN1pec)).